Consider the following 856-residue polypeptide: Lon protease (856 aa).

The Lon N-terminal domain maps to 68 to 261 (FPVLPLRDIV…KVLGLMESEI (194 aa)). Residue 412-419 (GPPGVGKT) coordinates ATP. The region spanning 647-828 (EDQVGVVTGL…DEVLHHALLR (182 aa)) is the Lon proteolytic domain. Catalysis depends on residues S734 and K777.

Belongs to the peptidase S16 family. Homohexamer. Organized in a ring with a central cavity.

It localises to the cytoplasm. The catalysed reaction is Hydrolysis of proteins in presence of ATP.. In terms of biological role, ATP-dependent serine protease that mediates the selective degradation of mutant and abnormal proteins as well as certain short-lived regulatory proteins. Required for cellular homeostasis and for survival from DNA damage and developmental changes induced by stress. Degrades polypeptides processively to yield small peptide fragments that are 5 to 10 amino acids long. Binds to DNA in a double-stranded, site-specific manner. The polypeptide is Lon protease (Azorhizobium caulinodans (strain ATCC 43989 / DSM 5975 / JCM 20966 / LMG 6465 / NBRC 14845 / NCIMB 13405 / ORS 571)).